The chain runs to 493 residues: Glutamate--tRNA ligase (493 aa).

Residues Pro10–Thr20 carry the 'HIGH' region motif. Positions 107, 109, 134, and 136 each coordinate Zn(2+). The 'KMSKS' region motif lies at Lys251–Arg255. Lys254 contacts ATP.

It belongs to the class-I aminoacyl-tRNA synthetase family. Glutamate--tRNA ligase type 1 subfamily. Monomer. It depends on Zn(2+) as a cofactor.

It localises to the cytoplasm. The catalysed reaction is tRNA(Glu) + L-glutamate + ATP = L-glutamyl-tRNA(Glu) + AMP + diphosphate. Catalyzes the attachment of glutamate to tRNA(Glu) in a two-step reaction: glutamate is first activated by ATP to form Glu-AMP and then transferred to the acceptor end of tRNA(Glu). The sequence is that of Glutamate--tRNA ligase from Ectopseudomonas mendocina (strain ymp) (Pseudomonas mendocina).